The following is a 59-amino-acid chain: DNA gyrase inhibitor YacG (59 aa).

Cysteine 9, cysteine 12, cysteine 27, and cysteine 31 together coordinate Zn(2+).

It belongs to the DNA gyrase inhibitor YacG family. As to quaternary structure, interacts with GyrB. It depends on Zn(2+) as a cofactor.

Inhibits all the catalytic activities of DNA gyrase by preventing its interaction with DNA. Acts by binding directly to the C-terminal domain of GyrB, which probably disrupts DNA binding by the gyrase. The protein is DNA gyrase inhibitor YacG of Geotalea daltonii (strain DSM 22248 / JCM 15807 / FRC-32) (Geobacter daltonii).